A 585-amino-acid polypeptide reads, in one-letter code: Glutamine--tRNA ligase (585 aa).

The short motif at 51–61 (PEPNGYLHIGH) is the 'HIGH' region element. Residues 52–54 (EPN) and 58–64 (HIGHAKS) contribute to the ATP site. Positions 84 and 238 each coordinate L-glutamine. Residues threonine 257 and 292–293 (RL) each bind ATP. The 'KMSKS' region motif lies at 299 to 303 (ITSKR).

The protein belongs to the class-I aminoacyl-tRNA synthetase family. As to quaternary structure, monomer.

Its subcellular location is the cytoplasm. The catalysed reaction is tRNA(Gln) + L-glutamine + ATP = L-glutaminyl-tRNA(Gln) + AMP + diphosphate. In Cupriavidus taiwanensis (strain DSM 17343 / BCRC 17206 / CCUG 44338 / CIP 107171 / LMG 19424 / R1) (Ralstonia taiwanensis (strain LMG 19424)), this protein is Glutamine--tRNA ligase.